A 402-amino-acid polypeptide reads, in one-letter code: 2,3-bisphosphoglycerate-independent phosphoglycerate mutase 2 (402 aa).

Belongs to the BPG-independent phosphoglycerate mutase family. A-PGAM subfamily.

The catalysed reaction is (2R)-2-phosphoglycerate = (2R)-3-phosphoglycerate. The protein operates within carbohydrate degradation; glycolysis; pyruvate from D-glyceraldehyde 3-phosphate: step 3/5. In terms of biological role, catalyzes the interconversion of 2-phosphoglycerate and 3-phosphoglycerate. The chain is 2,3-bisphosphoglycerate-independent phosphoglycerate mutase 2 (apgM2) from Methanothermobacter thermautotrophicus (strain ATCC 29096 / DSM 1053 / JCM 10044 / NBRC 100330 / Delta H) (Methanobacterium thermoautotrophicum).